A 338-amino-acid chain; its full sequence is Biotin synthase (338 aa).

One can recognise a Radical SAM core domain in the interval 46–270; sequence NEVQLSTLLS…VAVARITMPA (225 aa). Positions 61, 65, and 68 each coordinate [4Fe-4S] cluster. The [2Fe-2S] cluster site is built by Cys-105, Cys-136, Cys-196, and Arg-274.

The protein belongs to the radical SAM superfamily. Biotin synthase family. As to quaternary structure, homodimer. The cofactor is [4Fe-4S] cluster. [2Fe-2S] cluster serves as cofactor.

It carries out the reaction (4R,5S)-dethiobiotin + (sulfur carrier)-SH + 2 reduced [2Fe-2S]-[ferredoxin] + 2 S-adenosyl-L-methionine = (sulfur carrier)-H + biotin + 2 5'-deoxyadenosine + 2 L-methionine + 2 oxidized [2Fe-2S]-[ferredoxin]. It functions in the pathway cofactor biosynthesis; biotin biosynthesis; biotin from 7,8-diaminononanoate: step 2/2. In terms of biological role, catalyzes the conversion of dethiobiotin (DTB) to biotin by the insertion of a sulfur atom into dethiobiotin via a radical-based mechanism. The sequence is that of Biotin synthase from Rhizorhabdus wittichii (strain DSM 6014 / CCUG 31198 / JCM 15750 / NBRC 105917 / EY 4224 / RW1) (Sphingomonas wittichii).